Here is a 222-residue protein sequence, read N- to C-terminus: Collectrin (222 aa).

The N-terminal stretch at 1–14 is a signal peptide; that stretch reads MLWALFFLVTTIHA. Residues 15-141 are Extracellular-facing; sequence ELCRPDAENA…LAPPMDPSVP (127 aa). The 202-residue stretch at 21–222 folds into the Collectrin-like domain; it reads AENAFKVRLS…LTEDERLTPL (202 aa). Residues Asn76 and Asn93 are each glycosylated (N-linked (GlcNAc...) asparagine). The chain crosses the membrane as a helical span at residues 142–162; the sequence is VWIIVFGVIFCIVTVAIALLV. Residues 163 to 222 are Cytoplasmic-facing; the sequence is LSGIRQRRRNKKGPPGVEDAEDKCENIITIENGIPCDPLDMKGGHINDGFLTEDERLTPL. Phosphothreonine is present on residues Thr214 and Thr220.

The protein belongs to the CLTRN family. Monomer. Homodimer; dimerization prevents CLTRN cleavage by BACE2. Interacts with SLC6A18; this interaction regulates the trafficking of SLC6A18 to the cell membrane and its amino acid transporter activity. Interacts with SLC6A19; this interaction regulates the trafficking of SLC6A19 to the cell membrane and its amino acid transporter activity. Interacts with SNAPIN. Post-translationally, glycosylated. Glycosylation is required for plasma membrane localization and for its cleavage by BACE2. Proteolytically processed in pancreatic beta cells by BACE2 leading to the generation and extracellular release of soluble CLTRN, and a corresponding cell-associated C-terminal fragment which is later cleaved by gamma-secretase. This shedding process inactivates CLTRN. Three cleavage sites have been identified for BACE2, two clustered sites after Phe-116 and Leu-118 and a more membrane proximal site at Phe-125; the preferred BACE2 cleavage site seems to be between Phe-125 and Leu-126, Phe-116 and Leu-118 act as alternative sites. Kidney; collecting ducts. Pancreas; beta cells of islets.

It localises to the cell membrane. Its function is as follows. Plays an important role in amino acid transport by acting as binding partner of amino acid transporters SLC6A18 and SLC6A19, regulating their trafficking on the cell surface and their activity. May also play a role in trafficking of amino acid transporters SLC3A1 and SLC7A9 to the renal cortical cell membrane. Regulator of SNARE complex function. Stimulator of beta cell replication. In Rattus norvegicus (Rat), this protein is Collectrin.